The chain runs to 540 residues: Putative serine protease F56F10.1 (540 aa).

The first 16 residues, 1 to 16, serve as a signal peptide directing secretion; that stretch reads MLRNLLLLLLPLLIEA. N-linked (GlcNAc...) asparagine glycosylation is found at Asn-58 and Asn-87. Ser-182 serves as the catalytic Charge relay system. 6 N-linked (GlcNAc...) asparagine glycosylation sites follow: Asn-270, Asn-300, Asn-317, Asn-343, Asn-441, and Asn-449. The Charge relay system role is filled by Asp-453. Asn-475 carries an N-linked (GlcNAc...) asparagine glycan. His-479 (charge relay system) is an active-site residue.

Belongs to the peptidase S28 family.

The polypeptide is Putative serine protease F56F10.1 (Caenorhabditis elegans).